We begin with the raw amino-acid sequence, 60 residues long: Cytotoxin 10 (60 aa).

Intrachain disulfides connect cysteine 3-cysteine 21, cysteine 14-cysteine 38, cysteine 42-cysteine 53, and cysteine 54-cysteine 59.

This sequence belongs to the three-finger toxin family. Short-chain subfamily. Type IA cytotoxin sub-subfamily. As to quaternary structure, monomer in solution; Homodimer and oligomer in the presence of negatively charged lipids forming a pore with a size ranging between 20 and 30 Angstroms. As to expression, expressed by the venom gland.

Its subcellular location is the secreted. The protein resides in the target cell membrane. Functionally, shows cytolytic activity on many different cells by forming pore in lipid membranes. In vivo, increases heart rate or kills the animal by cardiac arrest. In addition, it binds to heparin with high affinity, interacts with Kv channel-interacting protein 1 (KCNIP1) in a calcium-independent manner, and binds to integrin alpha-V/beta-3 (ITGAV/ITGB3) with moderate affinity. This Naja annulifera (Banded Egyptian cobra) protein is Cytotoxin 10.